Consider the following 936-residue polypeptide: Isoleucine--tRNA ligase (936 aa).

The 'HIGH' region signature appears at 58–68 (PYANGRAHLGT). Glu561 serves as a coordination point for L-isoleucyl-5'-AMP. A 'KMSKS' region motif is present at residues 602–606 (KMSKS). Lys605 serves as a coordination point for ATP. Zn(2+)-binding residues include Cys899, Cys902, Cys919, and Cys922.

It belongs to the class-I aminoacyl-tRNA synthetase family. IleS type 1 subfamily. In terms of assembly, monomer. Requires Zn(2+) as cofactor.

Its subcellular location is the cytoplasm. The catalysed reaction is tRNA(Ile) + L-isoleucine + ATP = L-isoleucyl-tRNA(Ile) + AMP + diphosphate. Catalyzes the attachment of isoleucine to tRNA(Ile). As IleRS can inadvertently accommodate and process structurally similar amino acids such as valine, to avoid such errors it has two additional distinct tRNA(Ile)-dependent editing activities. One activity is designated as 'pretransfer' editing and involves the hydrolysis of activated Val-AMP. The other activity is designated 'posttransfer' editing and involves deacylation of mischarged Val-tRNA(Ile). In Coxiella burnetii (strain CbuG_Q212) (Coxiella burnetii (strain Q212)), this protein is Isoleucine--tRNA ligase.